We begin with the raw amino-acid sequence, 191 residues long: Chromobox protein homolog 5 (191 aa).

Residues 1–21 (MGKKTKRTADSSSSEDEEEYV) are disordered. Phosphoserine occurs at positions 11, 12, 13, and 14. Residues 20 to 78 (YVVEKVLDRRMVKGQVEYLLKWKGFSEEHNTWEPEKNLDCPELISEFMKKYKKMKEGEN) form the Chromo 1 domain. Lys-32 participates in a covalent cross-link: Glycyl lysine isopeptide (Lys-Gly) (interchain with G-Cter in SUMO2). At Lys-40 the chain carries N6-acetyllysine. The segment at 70 to 117 (YKKMKEGENNKPREKSEGNKRKSSFSNSADDIKSKKKREQSNDIARGF) is disordered. Positions 73–89 (MKEGENNKPREKSEGNK) are enriched in basic and acidic residues. Residue Lys-91 forms a Glycyl lysine isopeptide (Lys-Gly) (interchain with G-Cter in SUMO2) linkage. Phosphoserine is present on residues Ser-92, Ser-93, Ser-95, and Ser-97. Glycyl lysine isopeptide (Lys-Gly) (interchain with G-Cter in SUMO2) cross-links involve residues Lys-102, Lys-106, Lys-154, and Lys-184. Residues 121–179 (LEPEKIIGATDSCGDLMFLMKWKDTDEADLVLAKEANVKCPQIVIAFYEERLTWHAYPE) form the Chromo 2; shadow subtype domain.

In terms of assembly, homodimer. Interacts with histone H3 methylated at 'Lys-9'. Interacts (via Chromo 2; shadow subtype domain) with the MIS12 complex subunit NSL1; the interaction is direct, involves dimeric CBX5, and occurs during interphase. Interacts with POGZ; POGZ and PXVXL motif-containing proteins such as INCENP and TRIM28 compete for interaction with CBX5. Interacts with LRIF1 (via PxVxL motif). Interacts with INCENP. Interacts with TRIM24. Interacts (via the chromoshadow domain) with ATRX; the interaction is direct. Interacts (via the chromoshadow domain) with CHAF1A; the interaction is direct. Interacts (via the chromoshadow domain) with LBR; the interaction is direct. Interacts (via the chromoshadow domain) with NIPBL; the interaction is direct. Interacts (via the chromoshadow domain) with SP100; the interaction is direct. Interacts (via the chromoshadow domain) with STAM2; the interaction is direct. Interacts (via the chromoshadow domain) with TRIM28; the interaction is direct. Interacts (via the chromoshadow domain) with CBX3; the interaction is direct. Interacts with PRR14 (via N-terminus). Interacts with RRP1B. Interacts with HNRNPU (via C-terminus); this interaction is, at least in part, RNA-dependent. Interacts with ZNF263; recruited to the SIX3 promoter along with other proteins involved in chromatin modification and transcriptional corepression where it contributes to transcriptional repression. Interacts with AURKB during mitosis. Interacts with CHAMP1. Interacts with BAHD1. Interacts with HP1BP3. Interacts with CHD3. Interacts with CHD4. Interacts with SMYD5. Interacts with KMT5B. Interacts with KMT5C. Phosphorylation of HP1 and LBR may be responsible for some of the alterations in chromatin organization and nuclear structure which occur at various times during the cell cycle. Phosphorylated during interphase and possibly hyper-phosphorylated during mitosis. Post-translationally, ubiquitinated.

The protein resides in the nucleus. Its subcellular location is the chromosome. The protein localises to the centromere. Its function is as follows. Component of heterochromatin that recognizes and binds histone H3 tails methylated at 'Lys-9' (H3K9me), leading to epigenetic repression. In contrast, it is excluded from chromatin when 'Tyr-41' of histone H3 is phosphorylated (H3Y41ph). May contribute to the association of heterochromatin with the inner nuclear membrane by interactions with the lamin-B receptor (LBR). Involved in the formation of kinetochore through interaction with the MIS12 complex subunit NSL1. Required for the formation of the inner centromere. Functionally, component of heterochromatin that recognizes and binds histone H3 tails methylated at 'Lys-9' (H3K9me), leading to epigenetic repression. In contrast, it is excluded from chromatin when 'Tyr-41' of histone H3 is phosphorylated (H3Y41ph). Can interact with lamin-B receptor (LBR). This interaction can contribute to the association of the heterochromatin with the inner nuclear membrane. Involved in the formation of functional kinetochore through interaction with MIS12 complex proteins. The polypeptide is Chromobox protein homolog 5 (Cbx5) (Mus musculus (Mouse)).